Consider the following 143-residue polypeptide: Transcriptional regulator MraZ (143 aa).

SpoVT-AbrB domains are found at residues 5–47 and 76–119; these read THHP…PRAE and TDEQ…NAER.

It belongs to the MraZ family. In terms of assembly, forms oligomers.

It is found in the cytoplasm. The protein localises to the nucleoid. The sequence is that of Transcriptional regulator MraZ from Saccharopolyspora erythraea (strain ATCC 11635 / DSM 40517 / JCM 4748 / NBRC 13426 / NCIMB 8594 / NRRL 2338).